Reading from the N-terminus, the 126-residue chain is Histone H2B 1.2 (126 aa).

A compositionally biased stretch (low complexity) spans 1 to 12 (MPEPAKSAPAPK). Residues 1–35 (MPEPAKSAPAPKKGSKKAVTKTPKKDGKKRRKSRK) are disordered. N6-acetyllysine is present on residues K6 and K13. Position 15 is a phosphoserine (S15). An N6-acetyllysine mark is found at K16 and K21. An O-linked (GlcNAc) serine glycan is attached at S113. K121 is covalently cross-linked (Glycyl lysine isopeptide (Lys-Gly) (interchain with G-Cter in ubiquitin)).

This sequence belongs to the histone H2B family. The nucleosome is a histone octamer containing two molecules each of H2A, H2B, H3 and H4 assembled in one H3-H4 heterotetramer and two H2A-H2B heterodimers. The octamer wraps approximately 147 bp of DNA. Post-translationally, monoubiquitination of Lys-121 by BRE1 gives a specific tag for epigenetic transcriptional activation and is also prerequisite for histone H3 'Lys-4' and 'Lys-79' methylation. In terms of processing, phosphorylated on Ser-15 during developmentally programmed apoptosis; which may facilitate apoptotic chromatin condensation. GlcNAcylation at Ser-113 promotes monoubiquitination of Lys-121. It fluctuates in response to extracellular glucose, and associates with transcribed genes.

The protein resides in the nucleus. It localises to the chromosome. Its function is as follows. Core component of nucleosome. Nucleosomes wrap and compact DNA into chromatin, limiting DNA accessibility to the cellular machineries which require DNA as a template. Histones thereby play a central role in transcription regulation, DNA repair, DNA replication and chromosomal stability. DNA accessibility is regulated via a complex set of post-translational modifications of histones, also called histone code, and nucleosome remodeling. This Xenopus laevis (African clawed frog) protein is Histone H2B 1.2.